The primary structure comprises 429 residues: Adenylosuccinate synthetase (429 aa).

GTP is bound by residues glycine 12 to lysine 18 and glycine 40 to threonine 42. The Proton acceptor role is filled by aspartate 13. The Mg(2+) site is built by aspartate 13 and glycine 40. IMP contacts are provided by residues aspartate 13–lysine 16, asparagine 38–histidine 41, threonine 128, arginine 142, glutamine 223, threonine 238, and arginine 302. Histidine 41 acts as the Proton donor in catalysis. Substrate is bound at residue threonine 298–arginine 304. GTP contacts are provided by residues arginine 304, leucine 330–aspartate 332, and serine 412–glycine 414.

This sequence belongs to the adenylosuccinate synthetase family. Homodimer. Mg(2+) is required as a cofactor.

It is found in the cytoplasm. It catalyses the reaction IMP + L-aspartate + GTP = N(6)-(1,2-dicarboxyethyl)-AMP + GDP + phosphate + 2 H(+). The protein operates within purine metabolism; AMP biosynthesis via de novo pathway; AMP from IMP: step 1/2. Plays an important role in the de novo pathway of purine nucleotide biosynthesis. Catalyzes the first committed step in the biosynthesis of AMP from IMP. The polypeptide is Adenylosuccinate synthetase (Lactobacillus helveticus (strain DPC 4571)).